The sequence spans 220 residues: 26S proteasome non-ATPase regulatory subunit 9 (220 aa).

2 coiled-coil regions span residues 4–32 and 61–91; these read GTTT…GQIL and RLAR…YHSE. The 99-residue stretch at 102–200 folds into the PDZ domain; sequence RASALDLDSD…QLDLILVPKT (99 aa).

It belongs to the proteasome subunit p27 family. As to quaternary structure, interacts with PI31; this interaction is increased by PI31 ADP-ribosylation. Interacts with Rpt5.

Its function is as follows. Acts as a chaperone during the assembly of the 26S proteasome, specifically of the base subcomplex of the PA700/19S regulatory complex (RC). The protein is 26S proteasome non-ATPase regulatory subunit 9 of Drosophila melanogaster (Fruit fly).